Reading from the N-terminus, the 343-residue chain is MQEILIPLKEKNYKVFLGELPEIKLKQKALIISDSIVAGLHLPYLLERLKALEVRVCVIESGEKYKNFHSLERILNNAFEMQLNRHSLMIALGGGVISDMVGFASSIYFRGIDFINIPTTLLAQVDASVGGKTGINTPYGKNLIGSFHQPKAVYMDLAFLKTLEKREFQAGVAEIIKMAVCFDKNLVERLETKDLKDCLEEVIFQSVNIKAQVVVQDEKEQNIRAGLNYGHTFGHAIEKETDYERFLHGEAIAIGMRMANDLALSLGMLTLKEYERIENLLKKFDLIFHYKILDLQKFYERLFLDKKSENKTIKFILPKGVGAFEVASHIPKETIIKVLEKWH.

Residues 61–66 (SGEKYK), 95–96 (GV), 119–120 (TT), Lys-132, Lys-141, Asn-142, and 159–162 (FLKT) each bind NAD(+). Zn(2+) is bound by residues Glu-174, His-231, and His-248.

The protein belongs to the sugar phosphate cyclases superfamily. Dehydroquinate synthase family. As to quaternary structure, homodimer. Requires NAD(+) as cofactor. The cofactor is Co(2+). It depends on Zn(2+) as a cofactor.

The protein localises to the cytoplasm. It catalyses the reaction 7-phospho-2-dehydro-3-deoxy-D-arabino-heptonate = 3-dehydroquinate + phosphate. It participates in metabolic intermediate biosynthesis; chorismate biosynthesis; chorismate from D-erythrose 4-phosphate and phosphoenolpyruvate: step 2/7. Functionally, catalyzes the conversion of 3-deoxy-D-arabino-heptulosonate 7-phosphate (DAHP) to dehydroquinate (DHQ). The chain is 3-dehydroquinate synthase from Helicobacter pylori (strain ATCC 700392 / 26695) (Campylobacter pylori).